A 300-amino-acid chain; its full sequence is Ribonuclease HIII (300 aa).

In terms of domain architecture, RNase H type-2 spans 83 to 300 (IPIIGSDEVG…THKAQALLTK (218 aa)). A divalent metal cation-binding residues include aspartate 89, glutamate 90, and aspartate 194.

Belongs to the RNase HII family. RnhC subfamily. Mn(2+) serves as cofactor. Requires Mg(2+) as cofactor.

It is found in the cytoplasm. The enzyme catalyses Endonucleolytic cleavage to 5'-phosphomonoester.. Functionally, endonuclease that specifically degrades the RNA of RNA-DNA hybrids. The chain is Ribonuclease HIII from Streptococcus pyogenes serotype M12 (strain MGAS2096).